A 388-amino-acid chain; its full sequence is 3-sulfinopropanoyl-CoA desulfinase (388 aa).

Residues 121–124, Ser130, and 153–156 contribute to the FAD site; these read ICIT and HWIT. 240 to 241 provides a ligand contact to substrate; it reads YN. FAD-binding positions include Arg269, Gln336, 363-367, and Gln384; that span reads GGTAQ.

The protein belongs to the acyl-CoA dehydrogenase family. Homotrimer or homotetramer. The cofactor is FAD.

The enzyme catalyses 3-sulfinopropanoyl-CoA + H2O = propanoyl-CoA + sulfite + H(+). Its function is as follows. Catalyzes the conversion 3-sulfinopropanoyl-CoA (3SP-CoA) to propanoyl-CoA by abstraction of sulfite. Does not show dehydrogenase activity. The polypeptide is 3-sulfinopropanoyl-CoA desulfinase (Paraburkholderia xenovorans (strain LB400)).